Here is a 501-residue protein sequence, read N- to C-terminus: Type II methyltransferase M.BsuBI (501 aa).

Belongs to the N(4)/N(6)-methyltransferase family.

The enzyme catalyses a 2'-deoxyadenosine in DNA + S-adenosyl-L-methionine = an N(6)-methyl-2'-deoxyadenosine in DNA + S-adenosyl-L-homocysteine + H(+). Functionally, a beta subtype methylase that recognizes the double-stranded sequence 5'-CTGCAG-3', methylates A-5 on both strands, and protects the DNA from cleavage by the BsuBI endonuclease. In Bacillus subtilis, this protein is Type II methyltransferase M.BsuBI (hsdBM).